The sequence spans 293 residues: Iron-sulfur cluster transfer protein Nubpl (293 aa).

Residues 214–217 (CQNC) form a CXXC motif probably involved in coordinating iron-sulfur cluster binding region.

This sequence belongs to the Mrp/NBP35 ATP-binding proteins family. As to quaternary structure, homodimer; dimerization is not reliant on iron-sulfur cluster binding. The cofactor is [4Fe-4S] cluster.

Its subcellular location is the mitochondrion membrane. Functionally, iron-sulfur cluster transfer protein involved in the assembly of the mitochondrial membrane respiratory chain NADH dehydrogenase (Complex I). May deliver one or more Fe-S clusters to complex I subunits. Alleviates pausing in mitochondrial DNA (mtDNA) replication at slow zone 2. May be involved in mtDNA-helicase-mediated mtDNA unwinding and replication by transferring iron-sulfur clusters. The chain is Iron-sulfur cluster transfer protein Nubpl from Drosophila melanogaster (Fruit fly).